Here is a 338-residue protein sequence, read N- to C-terminus: MSTLRLLISDSYDPWFNLAVEESIFRQMPATQRVLFLWRNADTVVIGRAQNPWKECNTRRMEKDNVRLARRSSGGGAVFHDLGNTCFTFMAGKPEYDKTISTNIVLAALNSLGVMADASGRNDLVVKTAEGDRKVSGSAYRETKDRGFHHGTLLLNADLSRLANYLNPDKKKLAAKGITSVRSRVANLTELLPGLSHEQVCQAVAEAFFAHYGERVEAEVISPDKTPDLPNFAETFALQSSWEWNFGQAPAFSHLLDERFTWGGVELHFDVEKGYITRTQVFTDSLNPAPQEALAERLQGCQYRAEILQQACDALRVDFPEQEKELQELSAWIAGAVR.

One can recognise a BPL/LPL catalytic domain in the interval 29–216 (PATQRVLFLW…AFFAHYGERV (188 aa)). Residues arginine 71, 76–79 (GAVF), and lysine 134 contribute to the ATP site. A (R)-lipoate-binding site is contributed by lysine 134.

It belongs to the LplA family. In terms of assembly, monomer.

Its subcellular location is the cytoplasm. The catalysed reaction is L-lysyl-[lipoyl-carrier protein] + (R)-lipoate + ATP = N(6)-[(R)-lipoyl]-L-lysyl-[lipoyl-carrier protein] + AMP + diphosphate + H(+). The protein operates within protein modification; protein lipoylation via exogenous pathway; protein N(6)-(lipoyl)lysine from lipoate: step 1/2. Its pathway is protein modification; protein lipoylation via exogenous pathway; protein N(6)-(lipoyl)lysine from lipoate: step 2/2. Catalyzes both the ATP-dependent activation of exogenously supplied lipoate to lipoyl-AMP and the transfer of the activated lipoyl onto the lipoyl domains of lipoate-dependent enzymes. In Salmonella arizonae (strain ATCC BAA-731 / CDC346-86 / RSK2980), this protein is Lipoate-protein ligase A.